A 945-amino-acid polypeptide reads, in one-letter code: Isoleucine--tRNA ligase (945 aa).

Positions Pro-66–His-76 match the 'HIGH' region motif. Residue Glu-581 participates in L-isoleucyl-5'-AMP binding. The short motif at Lys-622–Ser-626 is the 'KMSKS' region element. Lys-625 serves as a coordination point for ATP. Zn(2+)-binding residues include Cys-908, Cys-911, Cys-928, and Cys-931.

Belongs to the class-I aminoacyl-tRNA synthetase family. IleS type 1 subfamily. As to quaternary structure, monomer. Requires Zn(2+) as cofactor.

It is found in the cytoplasm. It catalyses the reaction tRNA(Ile) + L-isoleucine + ATP = L-isoleucyl-tRNA(Ile) + AMP + diphosphate. Functionally, catalyzes the attachment of isoleucine to tRNA(Ile). As IleRS can inadvertently accommodate and process structurally similar amino acids such as valine, to avoid such errors it has two additional distinct tRNA(Ile)-dependent editing activities. One activity is designated as 'pretransfer' editing and involves the hydrolysis of activated Val-AMP. The other activity is designated 'posttransfer' editing and involves deacylation of mischarged Val-tRNA(Ile). The polypeptide is Isoleucine--tRNA ligase (Paraburkholderia phytofirmans (strain DSM 17436 / LMG 22146 / PsJN) (Burkholderia phytofirmans)).